The chain runs to 235 residues: Glucosamine-6-phosphate deaminase (235 aa).

D62 (proton acceptor; for enolization step) is an active-site residue. The active-site For ring-opening step is N128. The active-site Proton acceptor; for ring-opening step is H130. The active-site For ring-opening step is E135.

The protein belongs to the glucosamine/galactosamine-6-phosphate isomerase family. NagB subfamily.

The enzyme catalyses alpha-D-glucosamine 6-phosphate + H2O = beta-D-fructose 6-phosphate + NH4(+). It functions in the pathway amino-sugar metabolism; N-acetylneuraminate degradation; D-fructose 6-phosphate from N-acetylneuraminate: step 5/5. In terms of biological role, catalyzes the reversible isomerization-deamination of glucosamine 6-phosphate (GlcN6P) to form fructose 6-phosphate (Fru6P) and ammonium ion. This Streptococcus sanguinis (strain SK36) protein is Glucosamine-6-phosphate deaminase.